The sequence spans 965 residues: Sarcosine oxidase subunit alpha (965 aa).

NAD(+) contacts are provided by alanine 139, aspartate 158, glutamate 159, arginine 160, threonine 166, valine 205, alanine 418, leucine 423, and threonine 425. Residues threonine 692 and glutamate 784 each coordinate (6R)-5,10-methylene-5,6,7,8-tetrahydrofolate.

This sequence belongs to the GcvT family. Heterotetramer composed of subunits alpha (SoxA), beta (SoxB), gamma (SoxG) and delta (SoxD). It depends on NAD(+) as a cofactor.

Its subcellular location is the cytoplasm. It carries out the reaction sarcosine + (6S)-5,6,7,8-tetrahydrofolate + O2 = (6R)-5,10-methylene-5,6,7,8-tetrahydrofolate + glycine + H2O2. The enzyme catalyses sarcosine + O2 + H2O = formaldehyde + glycine + H2O2. Inhibited by Zn(2+), Cu(2+), Cd(2+), Hg(2+), Ag(+), p-chloromercuribenzoate (p-CMB), iodoacetamide, N-ethylmaleimide, CN(-), o-phenanthroline and sodium lauryl sulfate. Its function is as follows. In the presence of tetrahydrofolate, catalyzes the oxidative demethylation of sarcosine to yield glycine, 5,10-methylenetetrahydrofolate and hydrogen peroxide. In the absence of tetrahydrofolate, catalyzes the oxidative demethylation of sarcosine to yield glycine, formaldehyde and hydrogen peroxide. Can also use N-methyl-L-alanine and N-ethyl-L-glycine. Is very specific for oxygen as an acceptor. This chain is Sarcosine oxidase subunit alpha, found in Corynebacterium sp. (strain U-96).